A 76-amino-acid chain; its full sequence is Esculentin-2-ALa (76 aa).

The first 22 residues, 1-22, serve as a signal peptide directing secretion; sequence MFTLKKSMLLLFFLGTISLSLC. The propeptide occupies 23–39; that stretch reads EEERNADEDDGEKEVKR. An intrachain disulfide couples Cys-70 to Cys-76.

Expressed by the skin glands.

The protein localises to the secreted. Functionally, antimicrobial peptide with activity against Gram-positive and Gram-negative bacteria and against fungi. Has been tested against S.aureus (MIC=2.5 ug/mL), B.pumilus (MIC=2.5 ug/mL), B.cereus (MIC=7.5 ug/mL), E.coli (MIC=12.5 ug/mL), B.dysenteriae (MIC=7.5 ug/mL), A.cacoaceticus (MIC=25.0 ug/mL), P.aeruginosa (MIC=50.0 ug/mL) and C.albicans (MIC=2.5 ug/mL). Also shows a weak hemolytic activity. This is Esculentin-2-ALa from Amolops loloensis (Lolokou Sucker Frog).